The sequence spans 974 residues: Protein bicaudal C homolog 1 (974 aa).

The tract at residues 1–50 is disordered; that stretch reads MAAQGEPGYLAAQSDPGSNSERSTDSPVPGSEDDLVAGATLHSPEWSEER. S26, S31, and S43 each carry phosphoserine. 2 KH domains span residues 132–199 and 284–348; these read RVTL…RVRI and PVST…RQYL. An N6-acetyllysine modification is found at K398. Residues S576, S612, and S679 each carry the phosphoserine modification. 3 disordered regions span residues 593–644, 665–719, and 783–846; these read VLSA…GDLK, GTKN…HLAP, and YKPT…KSTE. Positions 602 to 619 are enriched in polar residues; the sequence is SIQTSGSEQTSPKSSPTE. A compositionally biased stretch (basic and acidic residues) spans 690-703; the sequence is LADKKAPGSERAAE. The 64-residue stretch at 873–936 folds into the SAM domain; it reads FKGSDLPELF…LLAISELNKN (64 aa).

Belongs to the BicC family. In terms of assembly, interacts (via KH domains) with ANKS6 (via SAM domain) in an RNA-dependent manner. Interacts with ANKS3.

The protein localises to the cytoplasm. In terms of biological role, putative RNA-binding protein. Acts as a negative regulator of Wnt signaling. May be involved in regulating gene expression during embryonic development. This Homo sapiens (Human) protein is Protein bicaudal C homolog 1 (BICC1).